The primary structure comprises 208 residues: Uracil phosphoribosyltransferase (208 aa).

5-phospho-alpha-D-ribose 1-diphosphate is bound by residues Arg-78, Arg-103, and 130–138 (DPMLATANS). Uracil-binding positions include Ile-193 and 198-200 (GDA). Asp-199 provides a ligand contact to 5-phospho-alpha-D-ribose 1-diphosphate.

Belongs to the UPRTase family. The cofactor is Mg(2+).

It carries out the reaction UMP + diphosphate = 5-phospho-alpha-D-ribose 1-diphosphate + uracil. The protein operates within pyrimidine metabolism; UMP biosynthesis via salvage pathway; UMP from uracil: step 1/1. Allosterically activated by GTP. Its function is as follows. Catalyzes the conversion of uracil and 5-phospho-alpha-D-ribose 1-diphosphate (PRPP) to UMP and diphosphate. This chain is Uracil phosphoribosyltransferase, found in Brucella canis (strain ATCC 23365 / NCTC 10854 / RM-666).